A 581-amino-acid chain; its full sequence is Proline--tRNA ligase (581 aa).

The protein belongs to the class-II aminoacyl-tRNA synthetase family. ProS type 1 subfamily. As to quaternary structure, homodimer.

The protein resides in the cytoplasm. The catalysed reaction is tRNA(Pro) + L-proline + ATP = L-prolyl-tRNA(Pro) + AMP + diphosphate. In terms of biological role, catalyzes the attachment of proline to tRNA(Pro) in a two-step reaction: proline is first activated by ATP to form Pro-AMP and then transferred to the acceptor end of tRNA(Pro). As ProRS can inadvertently accommodate and process non-cognate amino acids such as alanine and cysteine, to avoid such errors it has two additional distinct editing activities against alanine. One activity is designated as 'pretransfer' editing and involves the tRNA(Pro)-independent hydrolysis of activated Ala-AMP. The other activity is designated 'posttransfer' editing and involves deacylation of mischarged Ala-tRNA(Pro). The misacylated Cys-tRNA(Pro) is not edited by ProRS. The polypeptide is Proline--tRNA ligase (Polaromonas naphthalenivorans (strain CJ2)).